A 102-amino-acid polypeptide reads, in one-letter code: NADH-quinone oxidoreductase subunit K (102 aa).

The next 3 helical transmembrane spans lie at 5–25, 31–51, and 65–85; these read LSHY…GIFL, IVIL…MVAF, and LFIL…LVVF.

The protein belongs to the complex I subunit 4L family. As to quaternary structure, NDH-1 is composed of 14 different subunits. Subunits NuoA, H, J, K, L, M, N constitute the membrane sector of the complex.

Its subcellular location is the cell inner membrane. The catalysed reaction is a quinone + NADH + 5 H(+)(in) = a quinol + NAD(+) + 4 H(+)(out). In terms of biological role, NDH-1 shuttles electrons from NADH, via FMN and iron-sulfur (Fe-S) centers, to quinones in the respiratory chain. The immediate electron acceptor for the enzyme in this species is believed to be ubiquinone. Couples the redox reaction to proton translocation (for every two electrons transferred, four hydrogen ions are translocated across the cytoplasmic membrane), and thus conserves the redox energy in a proton gradient. The sequence is that of NADH-quinone oxidoreductase subunit K from Agrobacterium fabrum (strain C58 / ATCC 33970) (Agrobacterium tumefaciens (strain C58)).